We begin with the raw amino-acid sequence, 951 residues long: Spliceosome associated factor 3, U4/U6 recycling protein (951 aa).

A disordered region spans residues 1–58 (MAATGNEEQTLLPDIEEEAEGMEREMESEDDEEEGMGVEHSEEEDEEDTSEDERENEA). Positions 14-56 (DIEEEAEGMEREMESEDDEEEGMGVEHSEEEDEEDTSEDEREN) are enriched in acidic residues. 8 HAT repeats span residues 88–120 (GKLH…DEIR), 126–157 (SDRE…YSIG), 163–199 (GGIE…FEIV), 222–255 (AQLE…WADD), 304–336 (GDPA…YLDR), 339–371 (KIKD…ALER), 374–410 (ADHQ…YLRR), and 467–500 (KNMQ…LERS). The segment at 517–941 (CTSDYPEHVC…LDTQTKSLSN (425 aa)) is necessary and sufficient for U6 snRNA binding. Residues 533 to 593 (ERVEGSLEDW…VKADKKAQKK (61 aa)) are a coiled coil. Positions 567–581 (EALHARQEEEKAEQR) are enriched in basic and acidic residues. Positions 567–686 (EALHARQEEE…HDMPKEQRKD (120 aa)) are disordered. The segment covering 582–596 (RKVKADKKAQKKGQK) has biased composition (basic residues). Acidic residues predominate over residues 608 to 619 (DDDEEEWGEEAE). Over residues 674-686 (RQPHDMPKEQRKD) the composition is skewed to basic and acidic residues. RRM domains follow at residues 688–766 (NCVF…PCVD) and 785–862 (HKIF…ISNP). Positions 905–938 (RQSTPDAKAENGTISAPHATVTDGETSLDTQTKS) are disordered. A compositionally biased stretch (polar residues) spans 927–938 (DGETSLDTQTKS).

The protein localises to the nucleus. Its subcellular location is the nucleoplasm. The protein resides in the cajal body. It localises to the nucleus speckle. It is found in the cytoplasm. U6 snRNP-binding protein that functions as a recycling factor of the splicing machinery. Promotes the initial reassembly of U4 and U6 snRNPs following their ejection from the spliceosome during its maturation. May also function as a substrate targeting factor for deubiquitinases and mediate the deubiquitination of components of the spliceosome and histones. The chain is Spliceosome associated factor 3, U4/U6 recycling protein from Danio rerio (Zebrafish).